Consider the following 250-residue polypeptide: 2,3-bisphosphoglycerate-dependent phosphoglycerate mutase (250 aa).

Substrate is bound by residues 10–17 (RHGESEWN), 23–24 (TG), Arg-62, 89–92 (ERHY), Lys-100, 116–117 (RR), and 185–186 (GN). His-11 serves as the catalytic Tele-phosphohistidine intermediate. Residue Glu-89 is the Proton donor/acceptor of the active site.

This sequence belongs to the phosphoglycerate mutase family. BPG-dependent PGAM subfamily. In terms of assembly, homodimer.

The enzyme catalyses (2R)-2-phosphoglycerate = (2R)-3-phosphoglycerate. It participates in carbohydrate degradation; glycolysis; pyruvate from D-glyceraldehyde 3-phosphate: step 3/5. Catalyzes the interconversion of 2-phosphoglycerate and 3-phosphoglycerate. This chain is 2,3-bisphosphoglycerate-dependent phosphoglycerate mutase, found in Edwardsiella ictaluri (strain 93-146).